The primary structure comprises 250 residues: 3-deoxy-manno-octulosonate cytidylyltransferase (250 aa).

This sequence belongs to the KdsB family.

The protein localises to the cytoplasm. It catalyses the reaction 3-deoxy-alpha-D-manno-oct-2-ulosonate + CTP = CMP-3-deoxy-beta-D-manno-octulosonate + diphosphate. The protein operates within nucleotide-sugar biosynthesis; CMP-3-deoxy-D-manno-octulosonate biosynthesis; CMP-3-deoxy-D-manno-octulosonate from 3-deoxy-D-manno-octulosonate and CTP: step 1/1. It participates in bacterial outer membrane biogenesis; lipopolysaccharide biosynthesis. Functionally, activates KDO (a required 8-carbon sugar) for incorporation into bacterial lipopolysaccharide in Gram-negative bacteria. In Yersinia pseudotuberculosis serotype O:1b (strain IP 31758), this protein is 3-deoxy-manno-octulosonate cytidylyltransferase.